Reading from the N-terminus, the 146-residue chain is MNLNEYVKQVSLEDFDWEFRHQAYWNKRLRTTGGRFFPKDGHLDFNPKIYEAFGLETFRKIVRHELVHYHLYYQGKGYRHKDRDFKELLKQVGGLRYTPSISSPEGRLHYQCQQCHADFYRKRQIDLKRYRCGRCKGKLRLLKQER.

Residues 4–142 (NEYVKQVSLE…GRCKGKLRLL (139 aa)) enclose the SprT-like domain. H64 contributes to the Zn(2+) binding site. Residue E65 is part of the active site. H68 contacts Zn(2+).

It belongs to the SprT family. It depends on Zn(2+) as a cofactor.

The protein localises to the cytoplasm. The protein is Protein SprT-like of Streptococcus gordonii (strain Challis / ATCC 35105 / BCRC 15272 / CH1 / DL1 / V288).